The chain runs to 72 residues: Putative membrane protein insertion efficiency factor (72 aa).

Belongs to the UPF0161 family.

It is found in the cell inner membrane. Could be involved in insertion of integral membrane proteins into the membrane. This Myxococcus xanthus (strain DK1622) protein is Putative membrane protein insertion efficiency factor.